A 299-amino-acid chain; its full sequence is Putative peptidyl-prolyl cis-trans isomerase HP_0175 (299 aa).

The signal sequence occupies residues 1-21; the sequence is MKKNILNLALVGALSTSFLMA. A PpiC domain is found at 154–253; that stretch reads KQEAHARHIL…FGYHIIYLIS (100 aa).

The enzyme catalyses [protein]-peptidylproline (omega=180) = [protein]-peptidylproline (omega=0). The polypeptide is Putative peptidyl-prolyl cis-trans isomerase HP_0175 (Helicobacter pylori (strain ATCC 700392 / 26695) (Campylobacter pylori)).